We begin with the raw amino-acid sequence, 253 residues long: Triosephosphate isomerase (253 aa).

A substrate-binding site is contributed by 9–11 (NWK). H97 (electrophile) is an active-site residue. The active-site Proton acceptor is the E169. Substrate-binding positions include G175, S215, and 236-237 (GG).

Belongs to the triosephosphate isomerase family. Homodimer.

The protein resides in the cytoplasm. It carries out the reaction D-glyceraldehyde 3-phosphate = dihydroxyacetone phosphate. Its pathway is carbohydrate biosynthesis; gluconeogenesis. It functions in the pathway carbohydrate degradation; glycolysis; D-glyceraldehyde 3-phosphate from glycerone phosphate: step 1/1. Its function is as follows. Involved in the gluconeogenesis. Catalyzes stereospecifically the conversion of dihydroxyacetone phosphate (DHAP) to D-glyceraldehyde-3-phosphate (G3P). The polypeptide is Triosephosphate isomerase (Staphylococcus haemolyticus (strain JCSC1435)).